The chain runs to 183 residues: UPF0340 protein LCA_1354 (183 aa).

The protein belongs to the UPF0340 family.

This Latilactobacillus sakei subsp. sakei (strain 23K) (Lactobacillus sakei subsp. sakei) protein is UPF0340 protein LCA_1354.